We begin with the raw amino-acid sequence, 450 residues long: tRNA-2-methylthio-N(6)-dimethylallyladenosine synthase (450 aa).

Residues 3–118 form the MTTase N-terminal domain; sequence KKVFIKTFGC…LPELLQQRER (116 aa). Residues cysteine 12, cysteine 49, cysteine 81, cysteine 155, cysteine 159, and cysteine 162 each coordinate [4Fe-4S] cluster. The 236-residue stretch at 141 to 376 folds into the Radical SAM core domain; sequence SVQGASAFVS…VIDTHIRSIS (236 aa). Residues 377-440 form the TRAM domain; it reads ASRVGTVQRI…AYTLRGQYCA (64 aa).

The protein belongs to the methylthiotransferase family. MiaB subfamily. Monomer. Requires [4Fe-4S] cluster as cofactor.

The protein resides in the cytoplasm. The enzyme catalyses N(6)-dimethylallyladenosine(37) in tRNA + (sulfur carrier)-SH + AH2 + 2 S-adenosyl-L-methionine = 2-methylsulfanyl-N(6)-dimethylallyladenosine(37) in tRNA + (sulfur carrier)-H + 5'-deoxyadenosine + L-methionine + A + S-adenosyl-L-homocysteine + 2 H(+). In terms of biological role, catalyzes the methylthiolation of N6-(dimethylallyl)adenosine (i(6)A), leading to the formation of 2-methylthio-N6-(dimethylallyl)adenosine (ms(2)i(6)A) at position 37 in tRNAs that read codons beginning with uridine. This chain is tRNA-2-methylthio-N(6)-dimethylallyladenosine synthase, found in Verminephrobacter eiseniae (strain EF01-2).